The chain runs to 271 residues: 2-amino-3,7-dideoxy-D-threo-hept-6-ulosonate synthase (271 aa).

The Proton acceptor role is filled by aspartate 33. 1-deoxy-D-threo-hexo-2,5-diulose 6-phosphate is bound by residues 33 to 37 and 153 to 155; these read DHGVS and YPR. Residue tyrosine 153 is the Proton donor of the active site. Lysine 184 (schiff-base intermediate with substrate) is an active-site residue. Residues 209–210 and 236–237 contribute to the 1-deoxy-D-threo-hexo-2,5-diulose 6-phosphate site; these read GG and GR.

It belongs to the DeoC/FbaB aldolase family. ADHS subfamily. In terms of assembly, homodecamer.

The enzyme catalyses 1-deoxy-D-threo-hexo-2,5-diulose 6-phosphate + L-aspartate 4-semialdehyde = 2,3-dioxopropyl phosphate + 2-amino-2,3,7-trideoxy-D-lyxo-hept-6-ulosonate. Functionally, catalyzes a transaldol reaction between 6-deoxy-5-ketofructose 1-phosphate (DKFP) and L-aspartate semialdehyde (ASA) with an elimination of hydroxypyruvaldehyde phosphate to yield 2-amino-3,7-dideoxy-D-threo-hept-6-ulosonate (ADH). Plays a key role in an alternative pathway of the biosynthesis of 3-dehydroquinate (DHQ), which is involved in the canonical pathway for the biosynthesis of aromatic amino acids. The sequence is that of 2-amino-3,7-dideoxy-D-threo-hept-6-ulosonate synthase from Methanococcus aeolicus (strain ATCC BAA-1280 / DSM 17508 / OCM 812 / Nankai-3).